Here is a 525-residue protein sequence, read N- to C-terminus: MSEYLQQIAKRRTFAIISHPDAGKTTITEKMLLFGNAIKTAGTVKAKKSGIHATSDWMEMEKQRGISITTSVMQFPYNGRIINLLDTPGHEDFSEDTYRTLTAVDSALMVVDAVKGVEDRTIKLMNVCRLRDTPIVTFMNKFDRDTRDPLELLDEVENILKIKCAPMNWPIGMGKYFKGVYDLYNDEVTLFETGHGHEIYPYKKIKGLANAKDAIGIDLYEDLEMEIDLVRGASHEFDEQEFLEGNLTPVYFGTALSNFGVKEMMDGFTRYAPAPQHREADQRVVAADEQKLTGFVFKIQANMDEKHRDRIAFFRICSGKYEKGMKIFHERTGKQMQISKALTFMAGEREQVEEGYAGDIIGFHNHGSIQIGDSFTQGEKLKFKGIPNFAPEIFKRVKLNDPLKMKALQKGLVQLSEEGATQVFKPFISNDLVLGAVGVLQFDVVAQRLASEYNVKCSYEGVNVTLARWIFCNDEKKLNDFKKKYEVNLAYDGAGYLTYLAPTGVNLQLAQEKNPDIIFSATREH.

One can recognise a tr-type G domain in the interval 9–276 (AKRRTFAIIS…GFTRYAPAPQ (268 aa)). Residues 18–25 (SHPDAGKT), 86–90 (DTPGH), and 140–143 (NKFD) contribute to the GTP site.

The protein belongs to the TRAFAC class translation factor GTPase superfamily. Classic translation factor GTPase family. PrfC subfamily.

The protein resides in the cytoplasm. In terms of biological role, increases the formation of ribosomal termination complexes and stimulates activities of RF-1 and RF-2. It binds guanine nucleotides and has strong preference for UGA stop codons. It may interact directly with the ribosome. The stimulation of RF-1 and RF-2 is significantly reduced by GTP and GDP, but not by GMP. The chain is Peptide chain release factor 3 from Francisella tularensis subsp. novicida (strain U112).